The chain runs to 347 residues: UDP-N-acetylenolpyruvoylglucosamine reductase (347 aa).

The FAD-binding PCMH-type domain occupies 16–187 (AIEQCSHYLV…IAVGLKLPKT (172 aa)). The active site involves arginine 163. Serine 233 acts as the Proton donor in catalysis. Glutamate 328 is a catalytic residue.

The protein belongs to the MurB family. FAD is required as a cofactor.

It is found in the cytoplasm. It carries out the reaction UDP-N-acetyl-alpha-D-muramate + NADP(+) = UDP-N-acetyl-3-O-(1-carboxyvinyl)-alpha-D-glucosamine + NADPH + H(+). It functions in the pathway cell wall biogenesis; peptidoglycan biosynthesis. Cell wall formation. The chain is UDP-N-acetylenolpyruvoylglucosamine reductase from Vibrio vulnificus (strain CMCP6).